The sequence spans 242 residues: Methylthioribulose-1-phosphate dehydratase (242 aa).

The interval 1 to 23 (MTDQREEPQGSNDHLVRSSDPEH) is disordered. Cys102 contacts substrate. Residues His119 and His121 each coordinate Zn(2+). The Proton donor/acceptor role is filled by Glu148. His204 contributes to the Zn(2+) binding site.

This sequence belongs to the aldolase class II family. MtnB subfamily. Requires Zn(2+) as cofactor.

The protein localises to the cytoplasm. It carries out the reaction 5-(methylsulfanyl)-D-ribulose 1-phosphate = 5-methylsulfanyl-2,3-dioxopentyl phosphate + H2O. Its pathway is amino-acid biosynthesis; L-methionine biosynthesis via salvage pathway; L-methionine from S-methyl-5-thio-alpha-D-ribose 1-phosphate: step 2/6. In terms of biological role, catalyzes the dehydration of methylthioribulose-1-phosphate (MTRu-1-P) into 2,3-diketo-5-methylthiopentyl-1-phosphate (DK-MTP-1-P). The protein is Methylthioribulose-1-phosphate dehydratase of Uncinocarpus reesii (strain UAMH 1704).